The sequence spans 248 residues: Type III pantothenate kinase (248 aa).

ATP is bound at residue Asp-6–Lys-13. Substrate is bound by residues Tyr-92 and Gly-99–Arg-102. The active-site Proton acceptor is Asp-101. Residue Asp-121 coordinates K(+). Residue Thr-124 participates in ATP binding. Residue Thr-180 coordinates substrate.

Belongs to the type III pantothenate kinase family. Homodimer. NH4(+) is required as a cofactor. It depends on K(+) as a cofactor.

It localises to the cytoplasm. It carries out the reaction (R)-pantothenate + ATP = (R)-4'-phosphopantothenate + ADP + H(+). It participates in cofactor biosynthesis; coenzyme A biosynthesis; CoA from (R)-pantothenate: step 1/5. Functionally, catalyzes the phosphorylation of pantothenate (Pan), the first step in CoA biosynthesis. This chain is Type III pantothenate kinase, found in Pseudomonas aeruginosa (strain LESB58).